The chain runs to 142 residues: Translation initiation factor 2 subunit beta (142 aa).

It belongs to the eIF-2-beta/eIF-5 family. As to quaternary structure, heterotrimer composed of an alpha, a beta and a gamma chain.

Its function is as follows. eIF-2 functions in the early steps of protein synthesis by forming a ternary complex with GTP and initiator tRNA. The polypeptide is Translation initiation factor 2 subunit beta (Methanosphaera stadtmanae (strain ATCC 43021 / DSM 3091 / JCM 11832 / MCB-3)).